The sequence spans 335 residues: Probable geranylgeranyl transferase type-2 subunit beta (335 aa).

5 PFTB repeats span residues 74–115 (TEEI…IIFN), 122–163 (ADTI…HLLG), 170–211 (IDSA…AIAG), 218–259 (RDRT…AILG), and 266–312 (SDAM…DDTL). Residues 196 to 198 (HSG) and 238 to 250 (RPEKLPDVCYSWW) each bind geranylgeranyl diphosphate. The Zn(2+) site is built by Asp244, Cys246, and His296.

Belongs to the protein prenyltransferase subunit beta family. In terms of assembly, heterodimer of an alpha and a beta subunit. Zn(2+) serves as cofactor.

It catalyses the reaction geranylgeranyl diphosphate + L-cysteinyl-[protein] = S-geranylgeranyl-L-cysteinyl-[protein] + diphosphate. In terms of biological role, catalyzes the transfer of a geranyl-geranyl moiety from geranyl-geranyl pyrophosphate to both cysteines in Rab proteins with an -XXCC, -XCXC and -CCXX C-terminal. This chain is Probable geranylgeranyl transferase type-2 subunit beta (ggtb-1), found in Caenorhabditis elegans.